Reading from the N-terminus, the 177-residue chain is Alkyl hydroperoxide reductase AhpD (177 aa).

Cysteine 130 acts as the Proton donor in catalysis. Residues cysteine 130 and cysteine 133 are joined by a disulfide bond. Cysteine 133 (cysteine sulfenic acid (-SOH) intermediate) is an active-site residue.

This sequence belongs to the AhpD family. In terms of assembly, homotrimer.

It catalyses the reaction N(6)-[(R)-dihydrolipoyl]-L-lysyl-[lipoyl-carrier protein] + a hydroperoxide = N(6)-[(R)-lipoyl]-L-lysyl-[lipoyl-carrier protein] + an alcohol + H2O. Its function is as follows. Antioxidant protein with alkyl hydroperoxidase activity. Required for the reduction of the AhpC active site cysteine residues and for the regeneration of the AhpC enzyme activity. In Mycolicibacterium smegmatis (strain ATCC 700084 / mc(2)155) (Mycobacterium smegmatis), this protein is Alkyl hydroperoxide reductase AhpD.